The primary structure comprises 307 residues: Taste receptor type 2 member 41 (307 aa).

Over M1 to A7 the chain is Extracellular. A helical transmembrane segment spans residues F8–V28. Residues L29–R40 lie on the Cytoplasmic side of the membrane. A helical transmembrane segment spans residues L41–V61. Over G62–H88 the chain is Extracellular. Residues W89 to V109 traverse the membrane as a helical segment. Residues K110–W129 lie on the Cytoplasmic side of the membrane. A helical transmembrane segment spans residues V130 to W150. Over V151–S183 the chain is Extracellular. N-linked (GlcNAc...) asparagine glycosylation is present at N167. The chain crosses the membrane as a helical span at residues L184–I204. At N205–K234 the chain is on the cytoplasmic side. Residues S235–T255 traverse the membrane as a helical segment. Topologically, residues K256–F264 are extracellular. Residues Y265 to F285 traverse the membrane as a helical segment. Over S286–A307 the chain is Cytoplasmic.

This sequence belongs to the G-protein coupled receptor T2R family.

It is found in the membrane. In terms of biological role, receptor that may play a role in the perception of bitterness and is gustducin-linked. May play a role in sensing the chemical composition of the gastrointestinal content. The activity of this receptor may stimulate alpha gustducin, mediate PLC-beta-2 activation and lead to the gating of TRPM5. This chain is Taste receptor type 2 member 41 (TAS2R41), found in Pongo pygmaeus (Bornean orangutan).